A 269-amino-acid chain; its full sequence is uncharacterized protein (269 aa).

The disordered stretch occupies residues 1 to 22 (MSANGTDQQSDHGHSTSNNKDC).

This is an uncharacterized protein from Gallus gallus (Chicken).